Reading from the N-terminus, the 457-residue chain is Argininosuccinate lyase (457 aa).

The protein belongs to the lyase 1 family. Argininosuccinate lyase subfamily.

The protein localises to the cytoplasm. The catalysed reaction is 2-(N(omega)-L-arginino)succinate = fumarate + L-arginine. The protein operates within amino-acid biosynthesis; L-arginine biosynthesis; L-arginine from L-ornithine and carbamoyl phosphate: step 3/3. The sequence is that of Argininosuccinate lyase from Escherichia coli O157:H7.